Reading from the N-terminus, the 217-residue chain is Phosphatidylserine decarboxylase proenzyme (217 aa).

Ser182 serves as the catalytic Schiff-base intermediate with substrate; via pyruvic acid. At Ser182 the chain carries Pyruvic acid (Ser); by autocatalysis.

Belongs to the phosphatidylserine decarboxylase family. PSD-A subfamily. In terms of assembly, heterodimer of a large membrane-associated beta subunit and a small pyruvoyl-containing alpha subunit. Pyruvate serves as cofactor. Is synthesized initially as an inactive proenzyme. Formation of the active enzyme involves a self-maturation process in which the active site pyruvoyl group is generated from an internal serine residue via an autocatalytic post-translational modification. Two non-identical subunits are generated from the proenzyme in this reaction, and the pyruvate is formed at the N-terminus of the alpha chain, which is derived from the carboxyl end of the proenzyme. The post-translation cleavage follows an unusual pathway, termed non-hydrolytic serinolysis, in which the side chain hydroxyl group of the serine supplies its oxygen atom to form the C-terminus of the beta chain, while the remainder of the serine residue undergoes an oxidative deamination to produce ammonia and the pyruvoyl prosthetic group on the alpha chain.

It localises to the cell membrane. It carries out the reaction a 1,2-diacyl-sn-glycero-3-phospho-L-serine + H(+) = a 1,2-diacyl-sn-glycero-3-phosphoethanolamine + CO2. Its pathway is phospholipid metabolism; phosphatidylethanolamine biosynthesis; phosphatidylethanolamine from CDP-diacylglycerol: step 2/2. Its function is as follows. Catalyzes the formation of phosphatidylethanolamine (PtdEtn) from phosphatidylserine (PtdSer). The polypeptide is Phosphatidylserine decarboxylase proenzyme (Nitratidesulfovibrio vulgaris (strain ATCC 29579 / DSM 644 / CCUG 34227 / NCIMB 8303 / VKM B-1760 / Hildenborough) (Desulfovibrio vulgaris)).